A 275-amino-acid chain; its full sequence is tRNA uridine(34) hydroxylase (275 aa).

The Rhodanese domain maps to 122–218 (SRSDVYTIDT…YFKSTQNKNS (97 aa)). C178 functions as the Cysteine persulfide intermediate in the catalytic mechanism.

This sequence belongs to the TrhO family.

The catalysed reaction is uridine(34) in tRNA + AH2 + O2 = 5-hydroxyuridine(34) in tRNA + A + H2O. In terms of biological role, catalyzes oxygen-dependent 5-hydroxyuridine (ho5U) modification at position 34 in tRNAs. The protein is tRNA uridine(34) hydroxylase of Ehrlichia chaffeensis (strain ATCC CRL-10679 / Arkansas).